Consider the following 741-residue polypeptide: uncharacterized protein (741 aa).

Positions 1-22 (MKSVKIIIILALALLIQISHIA) are cleaved as a signal peptide.

This is an uncharacterized protein from Archaeoglobus fulgidus (strain ATCC 49558 / DSM 4304 / JCM 9628 / NBRC 100126 / VC-16).